The following is a 298-amino-acid chain: ADP/ATP translocase 2 (298 aa).

Met-1 carries the post-translational modification N-acetylmethionine. The Mitochondrial intermembrane portion of the chain corresponds to 1-7; it reads MTDAAVS. The residue at position 2 (Thr-2) is an N-acetylthreonine; in ADP/ATP translocase 2, N-terminally processed. A Solcar 1 repeat occupies 6–98; that stretch reads VSFAKDFLAG…FAFKDKYKQI (93 aa). Residue Ser-7 is modified to Phosphoserine. A helical transmembrane segment spans residues 8–37; it reads FAKDFLAGGVAAAISKTAVAPIERVKLLLQ. The residue at position 23 (Lys-23) is an N6-malonyllysine. At 38–74 the chain is on the mitochondrial matrix side; sequence VQHASKQITADKQYKGIIDCVVRIPKEQGVLSFWRGN. Lys-43 bears the N6-succinyllysine mark. Lys-52 bears the N6,N6,N6-trimethyllysine; alternate mark. An N6,N6-dimethyllysine; alternate modification is found at Lys-52. N6-methyllysine; alternate is present on Lys-52. A helical transmembrane segment spans residues 75 to 99; the sequence is LANVIRYFPTQALNFAFKDKYKQIF. ADP is bound by residues Arg-80 and Lys-92. N6-malonyllysine occurs at positions 92 and 96. The Mitochondrial intermembrane portion of the chain corresponds to 100 to 109; the sequence is LGGVDKRTQF. The residue at position 105 (Lys-105) is an N6-acetyllysine; alternate. Residue Lys-105 is modified to N6-succinyllysine; alternate. A helical membrane pass occupies residues 110-130; that stretch reads WRYFAGNLASGGAAGATSLCF. Solcar repeat units lie at residues 111–201 and 212–297; these read RYFA…AKGM and ISWM…IKKY. Topologically, residues 131–178 are mitochondrial matrix; that stretch reads VYPLDFARTRLAADVGKAGAEREFKGLGDCLVKIYKSDGIKGLYQGFN. The residue at position 147 (Lys-147) is an N6-methyllysine; alternate. Residues Lys-147 and Lys-155 each carry the N6-acetyllysine; alternate modification. Residues Lys-147 and Lys-155 each carry the N6-succinyllysine; alternate modification. Lys-147 carries the N6-malonyllysine; alternate modification. Lys-163 and Lys-166 each carry N6-acetyllysine. A helical membrane pass occupies residues 179–199; it reads VSVQGIIIYRAAYFGIYDTAK. Residues 200–210 lie on the Mitochondrial intermembrane side of the membrane; that stretch reads GMLPDPKNTHI. A helical membrane pass occupies residues 211-231; the sequence is FISWMIAQSVTAVAGLTSYPF. Topologically, residues 232–273 are mitochondrial matrix; that stretch reads DTVRRRMMMQSGRKGTDIMYTGTLDCWRKIARDEGGKAFFKG. Arg-235 contributes to the ADP binding site. The tract at residues 235–240 is important for transport activity; sequence RRRMMM. The Nucleotide carrier signature motif signature appears at 235 to 240; sequence RRRMMM. N6-acetyllysine; alternate is present on Lys-268. Lys-268 is modified (N6-succinyllysine; alternate). The helical transmembrane segment at 274-291 threads the bilayer; the sequence is AWSNVLRGMGGAFVLVLY. Residues 292 to 298 lie on the Mitochondrial intermembrane side of the membrane; sequence DEIKKYT.

The protein belongs to the mitochondrial carrier (TC 2.A.29) family. In terms of assembly, monomer. Component of the MMXD complex, which includes CIAO1, ERCC2, CIAO2B, MMS19 and SLC25A5/ANT2. Interacts with AK4. Interacts with TIMM44; leading to inhibit the presequence translocase TIMM23, thereby promoting stabilization of PINK1. Trimethylated by ANTKMT at Lys-52. Present in kidney, brain, heart, liver and skeletal muscle.

The protein localises to the mitochondrion inner membrane. It localises to the membrane. The catalysed reaction is ADP(in) + ATP(out) = ADP(out) + ATP(in). It catalyses the reaction H(+)(in) = H(+)(out). Its activity is regulated as follows. The matrix-open state (m-state) is inhibited by the membrane-permeable bongkrekic acid (BKA). The cytoplasmic-open state (c-state) is inhibited by the membrane-impermeable toxic inhibitor carboxyatractyloside (CATR). Proton transporter activity is inhibited by ADP:ATP antiporter activity. Its function is as follows. ADP:ATP antiporter that mediates import of ADP into the mitochondrial matrix for ATP synthesis, and export of ATP out to fuel the cell. Cycles between the cytoplasmic-open state (c-state) and the matrix-open state (m-state): operates by the alternating access mechanism with a single substrate-binding site intermittently exposed to either the cytosolic (c-state) or matrix (m-state) side of the inner mitochondrial membrane. In addition to its ADP:ATP antiporter activity, also involved in mitochondrial uncoupling and mitochondrial permeability transition pore (mPTP) activity. Plays a role in mitochondrial uncoupling by acting as a proton transporter: proton transport uncouples the proton flows via the electron transport chain and ATP synthase to reduce the efficiency of ATP production and cause mitochondrial thermogenesis. Proton transporter activity is inhibited by ADP:ATP antiporter activity, suggesting that SLC25A5/ANT2 acts as a master regulator of mitochondrial energy output by maintaining a delicate balance between ATP production (ADP:ATP antiporter activity) and thermogenesis (proton transporter activity). Proton transporter activity requires free fatty acids as cofactor, but does not transport it. Probably mediates mitochondrial uncoupling in tissues that do not express UCP1. Also plays a key role in mPTP opening, a non-specific pore that enables free passage of the mitochondrial membranes to solutes of up to 1.5 kDa, and which contributes to cell death. It is however unclear if SLC25A5/ANT2 constitutes a pore-forming component of mPTP or regulates it. Acts as a regulator of mitophagy independently of ADP:ATP antiporter activity: promotes mitophagy via interaction with TIMM44, leading to inhibit the presequence translocase TIMM23, thereby promoting stabilization of PINK1. As part of the mitotic spindle-associated MMXD complex it may play a role in chromosome segregation. The protein is ADP/ATP translocase 2 of Rattus norvegicus (Rat).